A 196-amino-acid polypeptide reads, in one-letter code: Nucleoside triphosphate pyrophosphatase (196 aa).

Asp73 acts as the Proton acceptor in catalysis.

Belongs to the Maf family. A divalent metal cation is required as a cofactor.

The protein localises to the cytoplasm. The enzyme catalyses a ribonucleoside 5'-triphosphate + H2O = a ribonucleoside 5'-phosphate + diphosphate + H(+). It catalyses the reaction a 2'-deoxyribonucleoside 5'-triphosphate + H2O = a 2'-deoxyribonucleoside 5'-phosphate + diphosphate + H(+). Functionally, nucleoside triphosphate pyrophosphatase. May have a dual role in cell division arrest and in preventing the incorporation of modified nucleotides into cellular nucleic acids. This Anaplasma marginale (strain Florida) protein is Nucleoside triphosphate pyrophosphatase.